Reading from the N-terminus, the 526-residue chain is MSYPQEVNKRRTFAIISHPDAGKTTITEKVLLYGNAIQTAGSVKGKGSSAHAKSDWMEMEKQRGISITTSVMQFPYNNCLVNLLDTPGHEDFSEDTYRTLTAVDSCLMVIDSAKGVEERTIKLIEVTRLRDTPILTFMNKLDRDIRDPMELLDEVESVLKIRCAPITWPIGCGKLFKGVYHIAKDETYLYQSGQGSTIQEVRIVKGLSSPELDAAVGDDLANQLREELELVQGASNEFDHEAFINGELTPVFFGTALGNFGVDHFLDGLTEWAPKPQARQTDVRTVESSEEKFSGFVFKIQANMDPKHRDRVAFMRVVSGKYEKGMKLKHVRIGKDVVISDALTFMAGDRAHAEEAYAGDIIGLHNHGTIQIGDTFTQGEVMKFTGIPNFAPELFRRIRLKDPLKQKQLLKGLVQLSEEGAVQVFRPLMNNDLIVGAVGVLQFDVVVSRLKTEYNVEAIYEAVNVATARWVECGDAKKFEEFKRKNEQNLALDGGDNLTYIAPTMVNLNLAQERYPDINFFKTREH.

The tr-type G domain occupies 8–277 (NKRRTFAIIS…GLTEWAPKPQ (270 aa)). GTP-binding positions include 17 to 24 (SHPDAGKT), 85 to 89 (DTPGH), and 139 to 142 (NKLD).

Belongs to the TRAFAC class translation factor GTPase superfamily. Classic translation factor GTPase family. PrfC subfamily.

It localises to the cytoplasm. Its function is as follows. Increases the formation of ribosomal termination complexes and stimulates activities of RF-1 and RF-2. It binds guanine nucleotides and has strong preference for UGA stop codons. It may interact directly with the ribosome. The stimulation of RF-1 and RF-2 is significantly reduced by GTP and GDP, but not by GMP. This chain is Peptide chain release factor 3, found in Actinobacillus pleuropneumoniae serotype 5b (strain L20).